Reading from the N-terminus, the 619-residue chain is ATP-dependent zinc metalloprotease FtsH (619 aa).

At 1–11 (MSNTDPQPPQK) the chain is on the cytoplasmic side. The helical transmembrane segment at 12-32 (LPLNWVVWTLAVALMLYYLPA) threads the bilayer. Topologically, residues 33 to 120 (MRDRPEPAIK…EVKEGHDASS (88 aa)) are periplasmic. The chain crosses the membrane as a helical span at residues 121 to 141 (SKVILLSYLPWIMFMIILFWL). At 142–619 (SRRTFRNFSG…IDECLQTGAS (478 aa)) the chain is on the cytoplasmic side. 216-223 (GPPGTGKT) is an ATP binding site. Residue His437 participates in Zn(2+) binding. Glu438 is a catalytic residue. Residues His441 and Asp513 each contribute to the Zn(2+) site.

It in the central section; belongs to the AAA ATPase family. This sequence in the C-terminal section; belongs to the peptidase M41 family. In terms of assembly, homohexamer. Zn(2+) serves as cofactor.

Its subcellular location is the cell inner membrane. Its function is as follows. Acts as a processive, ATP-dependent zinc metallopeptidase for both cytoplasmic and membrane proteins. Plays a role in the quality control of integral membrane proteins. The polypeptide is ATP-dependent zinc metalloprotease FtsH (Hahella chejuensis (strain KCTC 2396)).